We begin with the raw amino-acid sequence, 184 residues long: Chaperone protein YcdY (184 aa).

It belongs to the TorD/DmsD family. As to quaternary structure, interacts with YcdX.

Functionally, acts as a chaperone that increases YcdX activity, maybe by facilitating the correct insertion of the zinc ions into the catalytic site of YcdX. Involved in the swarming motility process. This is Chaperone protein YcdY (ycdY) from Escherichia coli (strain K12).